Consider the following 189-residue polypeptide: Orcokinin peptides (189 aa).

A signal peptide spans 1-21 (MRGAGGALAVAVAALLVCCSA). 2 consecutive propeptides follow at residues 22-124 (DPHQ…TFVK) and 145-174 (FYHLSSFDKKRYRADYPMDEIDLSHFPIGS).

It belongs to the orcokinin family. As to expression, orcokinin-like peptide: Expressed in corpora cardiaca (CC), corpora allata (CA), antennal lobe (AL) and gnathal ganglion (GNG) (at protein level). Expression in CC, CA and GNG detected in some animals, in AL in few animals (at protein level). Orcokinin-like peptide precursor-related peptide: Expressed in corpora cardiaca (CC), corpora allata (CA), antennal lobe (AL) and gnathal ganglion (GNG) (at protein level). Expression in GNG detected in most animals, expression in CC, CA and AL detected in some animals (at protein level).

It localises to the secreted. Its function is as follows. Myotropic peptides. The polypeptide is Orcokinin peptides (Agrotis ipsilon (Black cutworm moth)).